A 222-amino-acid polypeptide reads, in one-letter code: Peptide methionine sulfoxide reductase MsrA 1 (222 aa).

The active site involves Cys57.

It belongs to the MsrA Met sulfoxide reductase family.

It catalyses the reaction L-methionyl-[protein] + [thioredoxin]-disulfide + H2O = L-methionyl-(S)-S-oxide-[protein] + [thioredoxin]-dithiol. The catalysed reaction is [thioredoxin]-disulfide + L-methionine + H2O = L-methionine (S)-S-oxide + [thioredoxin]-dithiol. Has an important function as a repair enzyme for proteins that have been inactivated by oxidation. Catalyzes the reversible oxidation-reduction of methionine sulfoxide in proteins to methionine. The chain is Peptide methionine sulfoxide reductase MsrA 1 (msrA1) from Synechocystis sp. (strain ATCC 27184 / PCC 6803 / Kazusa).